The sequence spans 126 residues: Small ribosomal subunit protein uS11 (126 aa).

The protein belongs to the universal ribosomal protein uS11 family. As to quaternary structure, part of the 30S ribosomal subunit. Interacts with proteins S7 and S18. Binds to IF-3.

Its function is as follows. Located on the platform of the 30S subunit, it bridges several disparate RNA helices of the 16S rRNA. Forms part of the Shine-Dalgarno cleft in the 70S ribosome. The polypeptide is Small ribosomal subunit protein uS11 (Treponema pallidum (strain Nichols)).